The following is a 445-amino-acid chain: Probable aminotransferase TAT3 (445 aa).

This sequence belongs to the class-I pyridoxal-phosphate-dependent aminotransferase family. Pyridoxal 5'-phosphate serves as cofactor. In terms of tissue distribution, expressed in roots, leaves and cauline leaves.

In Arabidopsis thaliana (Mouse-ear cress), this protein is Probable aminotransferase TAT3 (TAT3).